The following is a 228-amino-acid chain: UPF0758 protein CTC_02075 (228 aa).

Residues 106–228 form the MPN domain; the sequence is NITNPKDAAY…YISLKEKDIL (123 aa). Zn(2+) contacts are provided by histidine 177, histidine 179, and aspartate 190. Positions 177–190 match the JAMM motif motif; it reads HNHPSGDTTPSKED.

This sequence belongs to the UPF0758 family.

This Clostridium tetani (strain Massachusetts / E88) protein is UPF0758 protein CTC_02075.